The sequence spans 326 residues: Methyltransferase phqN (326 aa).

It belongs to the class I-like SAM-binding methyltransferase superfamily. Erg6/SMT family.

It functions in the pathway alkaloid biosynthesis. Its function is as follows. Methyltransferase; part of the gene cluster that mediates the biosynthesis of paraherquamide, a fungal indole alkaloid that belongs to a family of natural products containing a characteristic bicyclo[2.2.2]diazaoctane core. The first steps in the biosynthesis of paraherquamide is the production of the beta-methyl-proline precursor from L-isoleucine. They require oxidation of a terminally hydroxylated L-isoleucine to the corresponding aldehyde by enzymes which have still to be identified. Spontaneous cyclization and dehydration would yield the 4-methyl pyrolline-5-carboxylic acid, which is then reduced by the pyrroline-5-carboxylate reductase phqD leading to the beta-methyl-proline precursor. The next step of paraherquamide biosynthesis involves coupling of beta-methyl-proline and L-tryptophan by the bimodular NRPS phqB, to produce a monooxopiperazine intermediate. The reductase (R) domain of phqB utilizes NADPH for hydride transfer to reduce the thioester bond of the T domain-tethered linear dipeptide to a hemithioaminal intermediate, which spontaneously cleaves the C-S bond to release the aldehyde product. This compound undergoes spontaneous cyclization and dehydration to give a dienamine which is reverse prenylated at C-2 by the reverse prenyltransferase phqJ. The other prenyltransferase present in the cluster, phqI may be a redundant gene in the pathway. During biosynthetic assembly, the key step to produce the polycyclic core is catalyzed by the bifunctional reductase and intramolecular [4+2] Diels-Alderase, phqE, resulting in formation of the [2.2.2] diazaoctane intermediate preparaherquamide. Following formation of preparaherquamide, an indole 2,3-epoxidation-initiated pinacol-like rearrangement is catalyzed by the phqK FAD-dependent monooxygenase. The prenyltransferase phqA, the cytochrome P450 monooxygenase phqL, and the FAD-linked oxidoreductase phqH (or the cytochrome P450 monooxygenase phqM), are proposed to be involved in the formation of the pyran ring. The FAD-dependent monooxygenase phqK is likely responsible for generation of the spiro-oxindole, and the N-methylation is likely mediated by the phqN methyltransferase leading to the isolable natural product paraherquamide F. However, the order of these biosynthetic steps has still to be determined. In late-stage paraherquamide biosynthesis, the third P450 monooxygenase, phqO, is probably responsible for the C-14 hydroxylation, transforming paraherquamide F to paraherquamide G, and paraherquamide E to the final product paraherquamide A. The expansion from the 6-membered ring pyran (in paraherquamides F and G) to the 7-membered dioxepin ring (in paraherquamides A and E) represents a poorly understood but intriguing process that probably involves the 2-oxoglutarate-dependent dioxygenase phqC. Finally, the remaining members of the paraherquamide cluster, including phqI as well as phqM (or phqH), do not have a clearly prescribed role and appear to be redundant. The sequence is that of Methyltransferase phqN from Penicillium fellutanum.